The chain runs to 310 residues: HPr kinase/phosphorylase (310 aa).

Catalysis depends on residues His-138 and Lys-159. Residue 153 to 160 (GDSGIGKS) coordinates ATP. Position 160 (Ser-160) interacts with Mg(2+). Asp-177 functions as the Proton acceptor; for phosphorylation activity. Proton donor; for dephosphorylation activity in the catalytic mechanism. Residues 201–210 (LEIRGVGIID) form an important for the catalytic mechanism of both phosphorylation and dephosphorylation region. Glu-202 contributes to the Mg(2+) binding site. Arg-243 is a catalytic residue. An important for the catalytic mechanism of dephosphorylation region spans residues 264 to 269 (PVKTGR).

Belongs to the HPrK/P family. In terms of assembly, homohexamer. Mg(2+) serves as cofactor.

The catalysed reaction is [HPr protein]-L-serine + ATP = [HPr protein]-O-phospho-L-serine + ADP + H(+). The enzyme catalyses [HPr protein]-O-phospho-L-serine + phosphate + H(+) = [HPr protein]-L-serine + diphosphate. Catalyzes the ATP- as well as the pyrophosphate-dependent phosphorylation of a specific serine residue in HPr, a phosphocarrier protein of the phosphoenolpyruvate-dependent sugar phosphotransferase system (PTS). HprK/P also catalyzes the pyrophosphate-producing, inorganic phosphate-dependent dephosphorylation (phosphorolysis) of seryl-phosphorylated HPr (P-Ser-HPr). The two antagonistic activities of HprK/P are regulated by several intracellular metabolites, which change their concentration in response to the absence or presence of rapidly metabolisable carbon sources (glucose, fructose, etc.) in the growth medium. Therefore, by controlling the phosphorylation state of HPr, HPrK/P is a sensor enzyme that plays a major role in the regulation of carbon metabolism and sugar transport: it mediates carbon catabolite repression (CCR), and regulates PTS-catalyzed carbohydrate uptake and inducer exclusion. This Streptococcus pyogenes serotype M1 protein is HPr kinase/phosphorylase (hprK).